A 122-amino-acid chain; its full sequence is Large ribosomal subunit protein uL14c (122 aa).

The protein belongs to the universal ribosomal protein uL14 family. In terms of assembly, part of the 50S ribosomal subunit.

It is found in the plastid. Its subcellular location is the chloroplast. Functionally, binds to 23S rRNA. In Lactuca sativa (Garden lettuce), this protein is Large ribosomal subunit protein uL14c.